A 351-amino-acid polypeptide reads, in one-letter code: Thiamine-phosphate synthase (351 aa).

The tract at residues 1–128 is unknown; that stretch reads MLNSNTKDHE…SKIASEIRYE (128 aa). The segment at 129–351 is thiamine-phosphate synthase; sequence IYTVEIDLLS…MILKELSHEN (223 aa). 4-amino-2-methyl-5-(diphosphooxymethyl)pyrimidine contacts are provided by residues 180–184 and Asn212; that span reads QHRFK. Residues Asp213 and Asp232 each contribute to the Mg(2+) site. Ser251 provides a ligand contact to 4-amino-2-methyl-5-(diphosphooxymethyl)pyrimidine. 2-[(2R,5Z)-2-carboxy-4-methylthiazol-5(2H)-ylidene]ethyl phosphate is bound at residue 277–279; sequence TTT. Lys280 is a 4-amino-2-methyl-5-(diphosphooxymethyl)pyrimidine binding site. Gly307 contributes to the 2-[(2R,5Z)-2-carboxy-4-methylthiazol-5(2H)-ylidene]ethyl phosphate binding site.

The protein belongs to the thiamine-phosphate synthase family. It depends on Mg(2+) as a cofactor.

The catalysed reaction is 2-[(2R,5Z)-2-carboxy-4-methylthiazol-5(2H)-ylidene]ethyl phosphate + 4-amino-2-methyl-5-(diphosphooxymethyl)pyrimidine + 2 H(+) = thiamine phosphate + CO2 + diphosphate. The enzyme catalyses 2-(2-carboxy-4-methylthiazol-5-yl)ethyl phosphate + 4-amino-2-methyl-5-(diphosphooxymethyl)pyrimidine + 2 H(+) = thiamine phosphate + CO2 + diphosphate. It carries out the reaction 4-methyl-5-(2-phosphooxyethyl)-thiazole + 4-amino-2-methyl-5-(diphosphooxymethyl)pyrimidine + H(+) = thiamine phosphate + diphosphate. It participates in cofactor biosynthesis; thiamine diphosphate biosynthesis; thiamine phosphate from 4-amino-2-methyl-5-diphosphomethylpyrimidine and 4-methyl-5-(2-phosphoethyl)-thiazole: step 1/1. Functionally, condenses 4-methyl-5-(beta-hydroxyethyl)thiazole monophosphate (THZ-P) and 2-methyl-4-amino-5-hydroxymethyl pyrimidine pyrophosphate (HMP-PP) to form thiamine monophosphate (TMP). The sequence is that of Thiamine-phosphate synthase from Prochlorococcus marinus (strain AS9601).